The sequence spans 241 residues: Small ribosomal subunit protein uS2 (241 aa).

This sequence belongs to the universal ribosomal protein uS2 family.

The polypeptide is Small ribosomal subunit protein uS2 (Pectobacterium carotovorum subsp. carotovorum (strain PC1)).